We begin with the raw amino-acid sequence, 175 residues long: Nucleoside triphosphate/diphosphate phosphatase (175 aa).

The Proton donor role is filled by arginine 23. The Mg(2+) site is built by asparagine 87, aspartate 103, aspartate 105, aspartate 107, aspartate 120, and glutamate 123.

This sequence belongs to the Ntdp family. Mg(2+) is required as a cofactor.

It carries out the reaction a ribonucleoside 5'-triphosphate + H2O = a ribonucleoside 5'-diphosphate + phosphate + H(+). It catalyses the reaction a ribonucleoside 5'-diphosphate + H2O = a ribonucleoside 5'-phosphate + phosphate + H(+). In terms of biological role, has nucleoside phosphatase activity towards nucleoside triphosphates and nucleoside diphosphates. In Oceanobacillus iheyensis (strain DSM 14371 / CIP 107618 / JCM 11309 / KCTC 3954 / HTE831), this protein is Nucleoside triphosphate/diphosphate phosphatase.